A 153-amino-acid polypeptide reads, in one-letter code: Interleukin-4 (153 aa).

The signal sequence occupies residues 1 to 24 (MGLTSQLLPPLFFLLACAGNFVHG). 3 disulfides stabilise this stretch: C27–C151, C48–C89, and C70–C123. N62 is a glycosylation site (N-linked (GlcNAc...) asparagine).

The protein belongs to the IL-4/IL-13 family. Interacts with IL4R. Interacts with IL13RA1.

It localises to the secreted. Cytokine secreted primarily by mast cells, T-cells, eosinophils, and basophils that plays a role in regulating antibody production, hematopoiesis and inflammation, and the development of effector T-cell responses. Induces the expression of class II MHC molecules on resting B-cells. Enhances both secretion and cell surface expression of IgE and IgG1. Also regulates the expression of the low affinity Fc receptor for IgE (CD23) on both lymphocytes and monocytes. Positively regulates IL31RA expression in macrophages. Stimulates autophagy in dendritic cells by interfering with mTORC1 signaling and through the induction of RUFY4. In addition, plays a critical role in higher functions of the normal brain, such as memory and learning. Upon binding to IL4, IL4R receptor dimerizes either with the common IL2R gamma chain/IL2RG to produce the type 1 signaling complex, located mainly on hematopoietic cells, or with the IL13RA1 to produce the type 2 complex, which is also expressed on nonhematopoietic cells. Engagement of both types of receptors initiates JAK3 and to a lower extend JAK1 phosphorylation leading to activation of the signal transducer and activator of transcription 6/STAT6. The polypeptide is Interleukin-4 (IL4) (Homo sapiens (Human)).